Here is a 233-residue protein sequence, read N- to C-terminus: Small ribosomal subunit protein uS3 (233 aa).

The region spanning 39-107 (VRQFLMKTLE…PVQINISEVR (69 aa)) is the KH type-2 domain.

Belongs to the universal ribosomal protein uS3 family. Part of the 30S ribosomal subunit. Forms a tight complex with proteins S10 and S14.

Functionally, binds the lower part of the 30S subunit head. Binds mRNA in the 70S ribosome, positioning it for translation. The sequence is that of Small ribosomal subunit protein uS3 from Buchnera aphidicola subsp. Acyrthosiphon pisum (strain 5A).